Consider the following 548-residue polypeptide: Rhodopsin kinase GRK7 (548 aa).

Phosphoserine; by PKA is present on Ser-34. The region spanning 54–171 (FHSLCEQQPI…LASPFYDRFL (118 aa)) is the RGS domain. The region spanning 186–449 (FTEFRVLGKG…ADDPRKHPFF (264 aa)) is the Protein kinase domain. Residues 192-200 (LGKGGFGEV) and Lys-215 contribute to the ATP site. Asp-311 (proton acceptor) is an active-site residue. The 66-residue stretch at 450–515 (QTVNFPRLEA…GAVPVAWQEE (66 aa)) folds into the AGC-kinase C-terminal domain. Residues 523–548 (EELNDPNRPSGDGKGDSSKSGVCLLL) are disordered. Cys-545 is modified (cysteine methyl ester). Cys-545 carries the S-geranylgeranyl cysteine lipid modification. Residues 546 to 548 (LLL) constitute a propeptide, removed in mature form.

The protein belongs to the protein kinase superfamily. AGC Ser/Thr protein kinase family. GPRK subfamily. As to quaternary structure, interacts (when prenylated) with PDE6D; this promotes release from membranes. Post-translationally, autophosphorylated. Phosphorylation at Ser-34 is regulated by light and activated by cAMP. In terms of tissue distribution, retina. Cones and rod.

It is found in the membrane. The catalysed reaction is L-threonyl-[rhodopsin] + ATP = O-phospho-L-threonyl-[rhodopsin] + ADP + H(+). It carries out the reaction L-seryl-[rhodopsin] + ATP = O-phospho-L-seryl-[rhodopsin] + ADP + H(+). Its activity is regulated as follows. Inhibited by phosphorylation of Ser-34. Functionally, retina-specific kinase involved in the shutoff of the photoresponse and adaptation to changing light conditions via cone opsin phosphorylation, including rhodopsin (RHO). The polypeptide is Rhodopsin kinase GRK7 (GRK7) (Ictidomys tridecemlineatus (Thirteen-lined ground squirrel)).